Here is a 1609-residue protein sequence, read N- to C-terminus: Transmembrane protein 131-like (1609 aa).

The N-terminal stretch at 1-40 is a signal peptide; it reads MAGLRRPQPGCYCRTAAAVNLLLGVFQVLLPCCRPGGAQG. Residues 41 to 869 lie on the Extracellular side of the membrane; it reads QAIEPLPNVV…VVPGPSWEES (829 aa). N-linked (GlcNAc...) asparagine glycans are attached at residues asparagine 343, asparagine 439, asparagine 522, asparagine 593, asparagine 709, and asparagine 846. Residues 696 to 916 form a required for Wnt-signaling inhibition and LRP6 degradation region; the sequence is DYGKVTSLIL…QNASSSSQQN (221 aa). Residues 870-890 form a helical membrane-spanning segment; the sequence is FWRLTVFFVSLSLLGVILIAF. At 891 to 1609 the chain is on the cytoplasmic side; the sequence is QQAQYILMEF…SRDSSYCGNV (719 aa). Disordered stretches follow at residues 946–974, 991–1014, 1108–1144, 1159–1178, and 1304–1340; these read RGKN…YGHS, TAAA…SSLP, KTSK…NQQV, VDTK…EDMF, and SSSD…PMVD. The span at 952–961 shows a compositional bias: polar residues; that stretch reads PVNTPQSRIQ. Residues 991 to 1000 are compositionally biased toward low complexity; it reads TAAASSTSTT. Phosphoserine is present on serine 1122. Low complexity predominate over residues 1304 to 1331; it reads SSSDCGSSSGSVRASRGSWGSWSSTSSS.

It belongs to the TMEM131 family. As to expression, expressed in thymocytes.

Its subcellular location is the cell membrane. It localises to the cytoplasm. The protein localises to the endoplasmic reticulum. Functionally, membrane-associated form that antagonizes canonical Wnt signaling by triggering lysosome-dependent degradation of Wnt-activated LRP6. Regulates thymocyte proliferation. This Homo sapiens (Human) protein is Transmembrane protein 131-like.